Reading from the N-terminus, the 754-residue chain is 5-methyltetrahydropteroyltriglutamate--homocysteine methyltransferase (754 aa).

Residues 15-18 and lysine 114 contribute to the 5-methyltetrahydropteroyltri-L-glutamate site; that span reads RELK. Residues 430 to 432 and glutamate 483 each bind L-homocysteine; that span reads IGS. L-methionine-binding positions include 430 to 432 and glutamate 483; that span reads IGS. 5-methyltetrahydropteroyltri-L-glutamate contacts are provided by residues 514 to 515 and tryptophan 560; that span reads RC. Aspartate 598 lines the L-homocysteine pocket. An L-methionine-binding site is contributed by aspartate 598. Glutamate 604 provides a ligand contact to 5-methyltetrahydropteroyltri-L-glutamate. 3 residues coordinate Zn(2+): histidine 641, cysteine 643, and glutamate 665. The active-site Proton donor is histidine 694. Cysteine 726 provides a ligand contact to Zn(2+).

Belongs to the vitamin-B12 independent methionine synthase family. Zn(2+) serves as cofactor.

It carries out the reaction 5-methyltetrahydropteroyltri-L-glutamate + L-homocysteine = tetrahydropteroyltri-L-glutamate + L-methionine. Its pathway is amino-acid biosynthesis; L-methionine biosynthesis via de novo pathway; L-methionine from L-homocysteine (MetE route): step 1/1. In terms of biological role, catalyzes the transfer of a methyl group from 5-methyltetrahydrofolate to homocysteine resulting in methionine formation. This chain is 5-methyltetrahydropteroyltriglutamate--homocysteine methyltransferase, found in Campylobacter jejuni subsp. jejuni serotype O:23/36 (strain 81-176).